A 66-amino-acid polypeptide reads, in one-letter code: uncharacterized protein (66 aa).

2 helical membrane passes run alanine 5 to asparagine 25 and isoleucine 30 to leucine 50.

The protein localises to the cell membrane. This is an uncharacterized protein from Bacillus subtilis (strain 168).